Here is a 556-residue protein sequence, read N- to C-terminus: Dihydroxy-acid dehydratase (556 aa).

Asp-78 contributes to the Mg(2+) binding site. Position 119 (Cys-119) interacts with [2Fe-2S] cluster. Mg(2+) contacts are provided by Asp-120 and Lys-121. N6-carboxylysine is present on Lys-121. A [2Fe-2S] cluster-binding site is contributed by Cys-191. Glu-442 contacts Mg(2+). Catalysis depends on Ser-468, which acts as the Proton acceptor.

The protein belongs to the IlvD/Edd family. In terms of assembly, homodimer. [2Fe-2S] cluster is required as a cofactor. Requires Mg(2+) as cofactor.

It carries out the reaction (2R)-2,3-dihydroxy-3-methylbutanoate = 3-methyl-2-oxobutanoate + H2O. The enzyme catalyses (2R,3R)-2,3-dihydroxy-3-methylpentanoate = (S)-3-methyl-2-oxopentanoate + H2O. It functions in the pathway amino-acid biosynthesis; L-isoleucine biosynthesis; L-isoleucine from 2-oxobutanoate: step 3/4. The protein operates within amino-acid biosynthesis; L-valine biosynthesis; L-valine from pyruvate: step 3/4. Functions in the biosynthesis of branched-chain amino acids. Catalyzes the dehydration of (2R,3R)-2,3-dihydroxy-3-methylpentanoate (2,3-dihydroxy-3-methylvalerate) into 2-oxo-3-methylpentanoate (2-oxo-3-methylvalerate) and of (2R)-2,3-dihydroxy-3-methylbutanoate (2,3-dihydroxyisovalerate) into 2-oxo-3-methylbutanoate (2-oxoisovalerate), the penultimate precursor to L-isoleucine and L-valine, respectively. This Clostridium beijerinckii (strain ATCC 51743 / NCIMB 8052) (Clostridium acetobutylicum) protein is Dihydroxy-acid dehydratase.